Consider the following 1705-residue polypeptide: Rho guanine nucleotide exchange factor 28 (1705 aa).

Disordered regions lie at residues 287–316 (RPEERTAMPSSGAETEEEIKNSVSSRSAAE) and 473–524 (KKRS…ETNT). A phosphoserine mark is found at S313 and S478. The segment covering 501–510 (PGSQSSSRTG) has biased composition (polar residues). Phosphoserine is present on S624. A disordered region spans residues 630–649 (MTSPRNKSKTKSKDAKDKEK). Residues 640 to 649 (KSKDAKDKEK) are compositionally biased toward basic and acidic residues. A Phorbol-ester/DAG-type zinc finger spans residues 652–699 (RHQFAPGTFSGVLQCLVCDKTLLGKESLQCSNCNANVHKGCKDAAPAC). Composition is skewed to polar residues over residues 710-721 (NKPQTILGNSSF) and 759-775 (VPGTTLESFRRSATSLE). The tract at residues 710-800 (NKPQTILGNS…ELLQSMGSSP (91 aa)) is disordered. Residues 777 to 791 (ESDHNSCRSRSHSDE) show a composition bias toward basic and acidic residues. The 196-residue stretch at 849 to 1044 (KRQDVIFELM…KDMIATVDLK (196 aa)) folds into the DH domain. The PH domain occupies 1086–1188 (TLLYDGLVYW…WMRRIQQAVE (103 aa)). Residues 1187-1207 (VESCPEEKGGRTSESDEDKRK) form a disordered region. Positions 1191–1207 (PEEKGGRTSESDEDKRK) are enriched in basic and acidic residues. The interaction with PTK2/FAK1; required for regulation of axonal branching and synapse formation stretch occupies residues 1295-1304 (AVSQSCEDSC). A disordered region spans residues 1312–1339 (TLSSHDVPGSPTASLVTGGREGRGCSDV). A mediates cytoplasmic retention and interaction with YWHAH region spans residues 1372-1383 (IIQAIQNLTRLL). An interaction with microtubules region spans residues 1425–1705 (QKSRDADRQH…DGAKENIVYL (281 aa)). Positions 1488 to 1525 (RSRGELDLQLQEYQHSLERLREGQRLVEREQARMRAQQ) form a coiled coil. Positions 1496–1527 (QLQEYQHSLERLREGQRLVEREQARMRAQQSL) are RNA-binding. S1538 carries the post-translational modification Phosphoserine. Residues 1566–1579 (FINEALVQMSFNTF) form a mediates cytoplasmic retention and interaction with MAPK8IP1 region. The disordered stretch occupies residues 1638-1705 (PFHESSKDSC…DGAKENIVYL (68 aa)). Residues 1641 to 1655 (ESSKDSCKNDLDTSH) show a composition bias toward basic and acidic residues. The span at 1656–1669 (TESPTPHDSNSHRP) shows a compositional bias: polar residues. A compositionally biased stretch (basic and acidic residues) spans 1688–1699 (TRQDGETGDGAK).

As to quaternary structure, homooligomer; forms cytoplasmic aggregates. Forms a complex with MAPK8 and MAPK8IP1. Interacts with RHOA. Interacts with microtubules. Interacts with YWHAE and YWHAH. Interacts with PTK2/FAK1. Interacts with NEFL. Interacts with CTNND2; prevents interaction with RHOA. Phosphorylated on tyrosine upon stimulation of cells by laminin.

The protein localises to the cytoplasm. It is found in the cell membrane. Functionally, functions as a RHOA-specific guanine nucleotide exchange factor regulating signaling pathways downstream of integrins and growth factor receptors. Functions in axonal branching, synapse formation and dendritic morphogenesis. Also functions in focal adhesion formation, cell motility and B-lymphocytes activation. May regulate NEFL expression and aggregation and play a role in apoptosis. The chain is Rho guanine nucleotide exchange factor 28 (ARHGEF28) from Homo sapiens (Human).